The primary structure comprises 92 residues: Protein S100-B (92 aa).

At serine 2 the chain carries N-acetylserine. EF-hand domains lie at 13–48 (DVFH…LEEI) and 49–84 (KEQE…VTTA). Histidine 16 is a Zn(2+) binding site. Ca(2+) is bound by residues serine 19, glutamate 22, and aspartate 24. Histidine 26 contacts Zn(2+). Ca(2+)-binding residues include aspartate 62, aspartate 64, aspartate 66, glutamate 68, and glutamate 73. Positions 86 and 91 each coordinate Zn(2+).

It belongs to the S-100 family. Dimer of either two alpha chains, or two beta chains, or one alpha and one beta chain. The S100B dimer binds two molecules of STK38. Interacts with CACYBP in a calcium-dependent manner. Interacts with ATAD3A; this interaction probably occurs in the cytosol prior to ATAD3A mitochondrial targeting. Interacts with S100A6. The S100B dimer interacts with two molecules of CAPZA1. Interacts with AGER. Interacts with PPP5C (via TPR repeats); the interaction is calcium-dependent and modulates PPP5C activity. Interacts with TPPP; this interaction inhibits TPPP dimerization. Interacts with isoform CLSTN3beta of CLSTN3; interaction promotes secretion.

The protein resides in the cytoplasm. The protein localises to the nucleus. It is found in the secreted. In terms of biological role, small zinc- and- and calcium-binding protein that is highly expressed in astrocytes and constitutes one of the most abundant soluble proteins in brain. Weakly binds calcium but binds zinc very tightly-distinct binding sites with different affinities exist for both ions on each monomer. Physiological concentrations of potassium ion antagonize the binding of both divalent cations, especially affecting high-affinity calcium-binding sites. Acts as a neurotrophic factor that promotes astrocytosis and axonal proliferation. Involved in innervation of thermogenic adipose tissue by acting as an adipocyte-derived neurotrophic factor that promotes sympathetic innervation of adipose tissue. Binds to and initiates the activation of STK38 by releasing autoinhibitory intramolecular interactions within the kinase. Interaction with AGER after myocardial infarction may play a role in myocyte apoptosis by activating ERK1/2 and p53/TP53 signaling. Could assist ATAD3A cytoplasmic processing, preventing aggregation and favoring mitochondrial localization. May mediate calcium-dependent regulation on many physiological processes by interacting with other proteins, such as TPR-containing proteins, and modulating their activity. The protein is Protein S100-B of Mus musculus (Mouse).